The primary structure comprises 703 residues: Peptide transporter CstA (703 aa).

Transmembrane regions (helical) follow at residues 6–26 (TKIL…YLAL), 29–49 (GESV…MIGY), 87–107 (VLFG…GPIL), 118–138 (LWIL…VLFI), 162–182 (VAMV…AMVV), 190–210 (PWGL…GIYM), 221–241 (ASII…VIAA), 256–276 (LAIV…WFLL), 282–302 (LSTF…VLVA), 319–339 (GPVF…CGAI), 374–394 (AVAI…YFAI), 463–483 (LMAF…LTAV), 514–534 (GLLA…QGAI), 547–567 (FGVS…TILV), 574–594 (YTWV…YGGI), and 660–680 (AILC…CIGI).

It belongs to the peptide transporter carbon starvation (CstA) (TC 2.A.114) family.

Its subcellular location is the cell inner membrane. In terms of biological role, involved in the uptake of dipeptides and tripeptides. May influence host-pathogen interactions. Involved in motility and agglutination, and has a role in stimulation of dendritic cells. The sequence is that of Peptide transporter CstA from Campylobacter jejuni subsp. jejuni serotype O:2 (strain ATCC 700819 / NCTC 11168).